A 285-amino-acid polypeptide reads, in one-letter code: Cyclin-Y-like protein 1B (285 aa).

Residues 111–209 (PKRNCIFRHF…CFLELLEFNI (99 aa)) form the Cyclin N-terminal domain.

This sequence belongs to the cyclin family. Cyclin Y subfamily.

The protein is Cyclin-Y-like protein 1B of Homo sapiens (Human).